A 542-amino-acid chain; its full sequence is Chaperonin GroEL (542 aa).

ATP-binding positions include 29–32 (TMGP), 86–90 (DGTTT), Gly413, 476–478 (NAA), and Asp492. Positions 521–542 (KPDPNANNQAPAAPQGGMGGMM) are disordered. Over residues 524 to 535 (PNANNQAPAAPQ) the composition is skewed to low complexity.

This sequence belongs to the chaperonin (HSP60) family. As to quaternary structure, forms a cylinder of 14 subunits composed of two heptameric rings stacked back-to-back. Interacts with the co-chaperonin GroES.

The protein resides in the cytoplasm. The catalysed reaction is ATP + H2O + a folded polypeptide = ADP + phosphate + an unfolded polypeptide.. Together with its co-chaperonin GroES, plays an essential role in assisting protein folding. The GroEL-GroES system forms a nano-cage that allows encapsulation of the non-native substrate proteins and provides a physical environment optimized to promote and accelerate protein folding. In Limosilactobacillus reuteri subsp. reuteri (strain JCM 1112) (Lactobacillus reuteri), this protein is Chaperonin GroEL.